A 632-amino-acid chain; its full sequence is X-ray repair cross-complementing protein 5 (632 aa).

Arg52 functions as the Schiff-base intermediate with DNA; for 5'-deoxyribose-5-phosphate lyase activity in the catalytic mechanism. Residues 283 to 490 (LYLNKDLSFS…VDKMKGIIQK (208 aa)) form the Ku domain. A disordered region spans residues 555–578 (DYSPEGKAAKRKQAGDAQAEKRPK). An SAP domain is found at 595-629 (LGKLTVSALKDTCRHYGLRSGGKKQELIDALTEYF).

This sequence belongs to the ku70 family. As to quaternary structure, heterodimer composed of XRCC5/Ku80 and XRCC6/Ku70. Component of the core long-range non-homologous end joining (NHEJ) complex (also named DNA-PK complex) composed of PRKDC, LIG4, XRCC4, XRCC6/Ku70, XRCC5/Ku86 and NHEJ1/XLF. Additional component of the NHEJ complex includes PAXX. Following autophosphorylation, PRKDC dissociates from DNA, leading to formation of the short-range NHEJ complex, composed of LIG4, XRCC4, XRCC6/Ku70, XRCC5/Ku86 and NHEJ1/XLF. Post-translationally, phosphorylated on serine residues.

It localises to the nucleus. The protein resides in the chromosome. Functionally, single-stranded DNA-dependent ATP-dependent helicase that plays a key role in DNA non-homologous end joining (NHEJ) by recruiting DNA-PK to DNA. Required for double-strand break repair and V(D)J recombination. Also has a role in chromosome translocation. Has a role in chromosome translocation. The DNA helicase II complex binds preferentially to fork-like ends of double-stranded DNA in a cell cycle-dependent manner. It works in the 3'-5' direction. During NHEJ, the XRCC5-XRRC6 dimer performs the recognition step: it recognizes and binds to the broken ends of the DNA and protects them from further resection. Binding to DNA may be mediated by XRCC6. The XRCC5-XRRC6 dimer acts as a regulatory subunit of the DNA-dependent protein kinase complex DNA-PK by increasing the affinity of the catalytic subunit PRKDC to DNA by 100-fold. The XRCC5-XRRC6 dimer is probably involved in stabilizing broken DNA ends and bringing them together. The assembly of the DNA-PK complex to DNA ends is required for the NHEJ ligation step. Probably also acts as a 5'-deoxyribose-5-phosphate lyase (5'-dRP lyase), by catalyzing the beta-elimination of the 5' deoxyribose-5-phosphate at an abasic site near double-strand breaks. 5'-dRP lyase activity allows to 'clean' the termini of abasic sites, a class of nucleotide damage commonly associated with strand breaks, before such broken ends can be joined. The XRCC5-XRRC6 dimer together with APEX1 acts as a negative regulator of transcription. This is X-ray repair cross-complementing protein 5 (XRCC6) from Gallus gallus (Chicken).